A 221-amino-acid chain; its full sequence is ATP-dependent dethiobiotin synthetase BioD (221 aa).

Residue 11 to 16 participates in ATP binding; the sequence is GVGKTY. Mg(2+) is bound at residue threonine 15. Lysine 36 is an active-site residue. Threonine 40 contributes to the substrate binding site. ATP is bound by residues aspartate 48 and 107–110; that span reads EGAG. The Mg(2+) site is built by aspartate 48 and glutamate 107.

This sequence belongs to the dethiobiotin synthetase family. In terms of assembly, homodimer. Requires Mg(2+) as cofactor.

It localises to the cytoplasm. The catalysed reaction is (7R,8S)-7,8-diammoniononanoate + CO2 + ATP = (4R,5S)-dethiobiotin + ADP + phosphate + 3 H(+). Its pathway is cofactor biosynthesis; biotin biosynthesis; biotin from 7,8-diaminononanoate: step 1/2. Functionally, catalyzes a mechanistically unusual reaction, the ATP-dependent insertion of CO2 between the N7 and N8 nitrogen atoms of 7,8-diaminopelargonic acid (DAPA, also called 7,8-diammoniononanoate) to form a ureido ring. This Hydrogenobaculum sp. (strain Y04AAS1) protein is ATP-dependent dethiobiotin synthetase BioD.